Reading from the N-terminus, the 503-residue chain is Plant-specific TFIIB-related protein 1 (503 aa).

The TFIIB-type zinc finger occupies 1 to 33 (MKCPYCSSAQGRCTTTSSGRSITECSSCGRVME). 4 disordered regions span residues 328–366 (PEKA…AKPI), 411–431 (NAMD…LGDK), 436–455 (IYLR…TGIS), and 468–503 (GSSS…HGDF). Over residues 333 to 346 (PTTTISTTRSTTPR) the composition is skewed to low complexity. A compositionally biased stretch (basic and acidic residues) spans 355-366 (FVEKDKPSAKPI).

Ubiquinated. Subsequent degradation by the proteasome pathway. Widely expressed.

The protein resides in the plastid. The protein localises to the chloroplast outer membrane. It localises to the nucleus. In terms of biological role, plant-specific TFIIB-related protein that may be involved in an intracellular signaling pathway between plastids and the nucleus. May act as general transcription factor (GTF) of RNA polymerase I-dependent transcription and rRNA synthesis. Forms a ternary complex with TBP2 and the rDNA promoter region. This chain is Plant-specific TFIIB-related protein 1, found in Arabidopsis thaliana (Mouse-ear cress).